Reading from the N-terminus, the 209-residue chain is Ribosomal RNA large subunit methyltransferase E (209 aa).

S-adenosyl-L-methionine-binding residues include glycine 63, tryptophan 65, aspartate 83, aspartate 99, and aspartate 124. Lysine 164 (proton acceptor) is an active-site residue.

The protein belongs to the class I-like SAM-binding methyltransferase superfamily. RNA methyltransferase RlmE family.

It localises to the cytoplasm. The catalysed reaction is uridine(2552) in 23S rRNA + S-adenosyl-L-methionine = 2'-O-methyluridine(2552) in 23S rRNA + S-adenosyl-L-homocysteine + H(+). In terms of biological role, specifically methylates the uridine in position 2552 of 23S rRNA at the 2'-O position of the ribose in the fully assembled 50S ribosomal subunit. In Aeromonas hydrophila subsp. hydrophila (strain ATCC 7966 / DSM 30187 / BCRC 13018 / CCUG 14551 / JCM 1027 / KCTC 2358 / NCIMB 9240 / NCTC 8049), this protein is Ribosomal RNA large subunit methyltransferase E.